We begin with the raw amino-acid sequence, 96 residues long: Pro-glucagon (96 aa).

Basic and acidic residues-rich tracts occupy residues 1–12 (LQDAEDSSRFDA) and 19–30 (EARELSTPKXHS). Residues 1–35 (LQDAEDSSRFDADDTLAGEARELSTPKXHSEGTFS) form a disordered region.

The protein belongs to the glucagon family.

It is found in the secreted. Its function is as follows. Plays a key role in glucose metabolism and homeostasis. Regulates blood glucose by increasing gluconeogenesis and decreasing glycolysis. The polypeptide is Pro-glucagon (gcg) (Myoxocephalus scorpius (Shorthorn sculpin)).